The primary structure comprises 121 residues: Probable K(+)/H(+) antiporter subunit G (121 aa).

3 consecutive transmembrane segments (helical) span residues 10 to 32, 45 to 67, and 72 to 94; these read WAAL…GSLG, APTI…CFAV, and WVFH…LMLL.

The protein belongs to the CPA3 antiporters (TC 2.A.63) subunit G family. May form a hetero-oligomeric complex that consists of six subunits: PhaAB, PhaC, PhaD, PhaE, PhaF and PhaG.

Its subcellular location is the cell membrane. In terms of biological role, part of a K(+) efflux system which is required for the adaptation of R.meliloti to alkaline pH as well as for the infection process during symbiotic nodule development. This Rhizobium meliloti (strain 1021) (Ensifer meliloti) protein is Probable K(+)/H(+) antiporter subunit G (phaG).